A 260-amino-acid chain; its full sequence is Oxidoreductase macE (260 aa).

This sequence belongs to the oxidoreductase OpS7 family.

Its pathway is secondary metabolite biosynthesis; terpenoid biosynthesis. Oxidoreductase; part of the gene cluster that mediates the biosynthesis of macrophorins, isoprenoid epoxycyclohexenones containing cyclized drimane moieties. The first step of the pathway is the synthesis of 6-methylsalicylic acid (6-MSA) by the polyketide synthase macA. 6-MSA is then converted to m-cresol by the decarboxylase macB. The cytochrome P450 monooxygenase macC then catalyzes the oxidation of m-cresol to toluquinol. Epoxidation of toluquinol is then performed by the short chain dehydrogenase macD, with the help of macE, and a further prenylation by macG leads to 7-deacetoxyyanuthone A. The next step is the hydroxylation of C-22 of 7-deacetoxyyanuthone A by the cytochrome P450 monooxygenase macH to yield 22-deacetylyanuthone A. O-Mevalon transferase macI then attaches mevalon to the hydroxyl group of 22-deacetylyanuthone A to produce yanuthone E. The terpene cyclase macJ catalyzes the cyclization of 22-deacetylyanuthone A to macrophorin A. MacJ is also able to catalyze cyclization of yanuthone E and 7-deacetoxyyanuthone A to their corresponding macrophorins. The macJ products can be further modified by macH and macJ, as well as by the FAD-dependent monooxygenase macF, to produce additional macrophorins, including 4'-oxomacrophorin A, 4'-oxomacrophorin D and 4'-oxomacrophorin E. This chain is Oxidoreductase macE, found in Penicillium terrestre.